A 1466-amino-acid polypeptide reads, in one-letter code: ABC transporter G family member 40 (1466 aa).

A disordered region spans residues 1–21 (MSHRHHAALVASASGRSPSWG). The region spanning 176-449 (GLIGQFGSSN…FEASGFRCPQ (274 aa)) is the ABC transporter 1 domain. 209-216 (GPPSSGKS) provides a ligand contact to ATP. The ABC transmembrane type-2 1 domain occupies 527–740 (ESLKAVLCRE…SQNAISINEF (214 aa)). Helical transmembrane passes span 545–565 (FLYI…MTVF), 581–601 (FLGA…SELN), 633–653 (VPVS…VMGF), 664–684 (FLAF…LGAI), 690–710 (IAIS…GFVI), and 776–796 (FWLS…LYIL). A compositionally biased stretch (basic and acidic residues) spans 821-831 (YTETRNEEHRS). Residues 821 to 851 (YTETRNEEHRSRTSTTTSSIPTSANGEGNRP) form a disordered region. A compositionally biased stretch (low complexity) spans 833–843 (TSTTTSSIPTS). Residues 865 to 1117 (LCFNHLNYYV…KLVEYFETIL (253 aa)) form the ABC transporter 2 domain. Residue 910–917 (GVSGAGKT) coordinates ATP. In terms of domain architecture, ABC transmembrane type-2 2 spans 1190 to 1404 (IQCVANLWKQ…TIYGVIASQF (215 aa)). 7 consecutive transmembrane segments (helical) span residues 1209-1229 (YNSL…TVFW), 1241-1261 (LYNL…TNCM), 1297-1317 (FIYN…MIGY), 1327-1347 (FLFF…MLVA), 1355-1375 (ANIL…FLIF), 1396-1416 (IYGV…VPGG), and 1435-1455 (FLGY…LIFG).

The protein belongs to the ABC transporter superfamily. ABCG family. PDR (TC 3.A.1.205) subfamily.

Its subcellular location is the membrane. The sequence is that of ABC transporter G family member 40 from Oryza sativa subsp. japonica (Rice).